Consider the following 40-residue polypeptide: Subtilisin-like serine protease AS-E1 (40 aa).

The Peptidase S8 domain maps to 4–40 (PWGLARISHRTTGATSYVYDDSAGEGTCSYIIDTGIY). Asp-36 serves as the catalytic Charge relay system.

Belongs to the peptidase S8 family. In terms of assembly, homodimer.

Strongly inhibited by antipain and PMSF. Inhibited by benzamidine and aprotinin by 80% and 17% respectively. Little or no inhibition by EDTA, E-64, iodoacetic acid, leupeptin and FUT-175. Subtilisin-like serine protease. Cleaves prothrombin at 155-Arg-|-Ser-156, 45-Thr-|-Ala-46 and 316-Tyr-|-Ile-317 to produce meizothrombin(desF1)-like molecules. Degrades fibrinogen. Inhibits plasma coagulation. This chain is Subtilisin-like serine protease AS-E1, found in Acremonium sp.